The primary structure comprises 505 residues: L-carnitine/gamma-butyrobetaine antiporter (505 aa).

12 consecutive transmembrane segments (helical) span residues 10 to 30 (IEPK…WLTV), 51 to 71 (WGWA…WLVF), 92 to 112 (IFMM…SIEI), 143 to 163 (GPLP…FFFV), 195 to 215 (FYLV…TPLV), 231 to 251 (LDAI…ACGL), 263 to 283 (SYLS…SFIM), 316 to 336 (WTVF…IFLA), 347 to 367 (LCFG…TVLG), 403 to 423 (LSTA…VTLI), 446 to 466 (LLVR…LLAL), and 475 to 495 (AIIA…LSFI).

The protein belongs to the BCCT transporter (TC 2.A.15) family. CaiT subfamily. Homotrimer.

The protein resides in the cell inner membrane. The catalysed reaction is 4-(trimethylamino)butanoate(in) + (R)-carnitine(out) = 4-(trimethylamino)butanoate(out) + (R)-carnitine(in). The protein operates within amine and polyamine metabolism; carnitine metabolism. Its function is as follows. Catalyzes the exchange of L-carnitine for gamma-butyrobetaine. The polypeptide is L-carnitine/gamma-butyrobetaine antiporter (Salmonella gallinarum (strain 287/91 / NCTC 13346)).